The sequence spans 348 residues: Sensor protein VraS (348 aa).

2 consecutive transmembrane segments (helical) span residues 13-33 and 43-63; these read ILVY…VNII and IFGI…CIIV. One can recognise a Histidine kinase domain in the interval 150–341; that stretch reads RLARELHDSV…RIEVKAPLNK (192 aa).

It is found in the cell membrane. It catalyses the reaction ATP + protein L-histidine = ADP + protein N-phospho-L-histidine.. In terms of biological role, member of the two-component regulatory system VraS/VraR involved in the control of the cell wall peptidoglycan biosynthesis. Probably activates VraR by phosphorylation. In Staphylococcus epidermidis (strain ATCC 35984 / DSM 28319 / BCRC 17069 / CCUG 31568 / BM 3577 / RP62A), this protein is Sensor protein VraS (vraS).